We begin with the raw amino-acid sequence, 142 residues long: Neuritin (142 aa).

The signal sequence occupies residues 1 to 27; the sequence is MGLKLNGRYISLILAVQIAYLVQAVRA. G116 carries GPI-anchor amidated glycine lipidation. Residues 117–142 constitute a propeptide, removed in mature form; sequence AAGPLLPALPVLLVSLSAALATWLSF.

It belongs to the neuritin family. In terms of assembly, component of the outer core of AMPAR complex. AMPAR complex consists of an inner core made of 4 pore-forming GluA/GRIA proteins (GRIA1, GRIA2, GRIA3 and GRIA4) and 4 major auxiliary subunits arranged in a twofold symmetry. One of the two pairs of distinct binding sites is occupied either by CNIH2, CNIH3 or CACNG2, CACNG3. The other harbors CACNG2, CACNG3, CACNG4, CACNG8 or GSG1L. This inner core of AMPAR complex is complemented by outer core constituents binding directly to the GluA/GRIA proteins at sites distinct from the interaction sites of the inner core constituents. Outer core constituents include at least PRRT1, PRRT2, CKAMP44/SHISA9, FRRS1L and NRN1. The proteins of the inner and outer core serve as a platform for other, more peripherally associated AMPAR constituents. Alone or in combination, these auxiliary subunits control the gating and pharmacology of the AMPAR complex and profoundly impact their biogenesis and protein processing.

It localises to the cell membrane. It is found in the synapse. Its function is as follows. Promotes neurite outgrowth and especially branching of neuritic processes in primary hippocampal and cortical cells. The protein is Neuritin (NRN1) of Bos taurus (Bovine).